We begin with the raw amino-acid sequence, 42 residues long: Photosystem I reaction center subunit IX (42 aa).

The chain crosses the membrane as a helical span at residues 7–27 (YLSVAPVLSTLWFGSLAGLLI).

It belongs to the PsaJ family.

The protein resides in the plastid. The protein localises to the chloroplast thylakoid membrane. May help in the organization of the PsaE and PsaF subunits. This is Photosystem I reaction center subunit IX from Daucus carota (Wild carrot).